The chain runs to 78 residues: Small ribosomal subunit protein bS18B (78 aa).

This sequence belongs to the bacterial ribosomal protein bS18 family. As to quaternary structure, part of the 30S ribosomal subunit. Forms a tight heterodimer with protein bS6.

Functionally, binds as a heterodimer with protein bS6 to the central domain of the 16S rRNA, where it helps stabilize the platform of the 30S subunit. The sequence is that of Small ribosomal subunit protein bS18B from Streptomyces griseus subsp. griseus (strain JCM 4626 / CBS 651.72 / NBRC 13350 / KCC S-0626 / ISP 5235).